Consider the following 167-residue polypeptide: Ribosome maturation factor RimM (167 aa).

Residues 92–166 (DGVYYYRELL…EVRVELMEGL (75 aa)) enclose the PRC barrel domain.

The protein belongs to the RimM family. In terms of assembly, binds ribosomal protein uS19.

The protein localises to the cytoplasm. An accessory protein needed during the final step in the assembly of 30S ribosomal subunit, possibly for assembly of the head region. Essential for efficient processing of 16S rRNA. May be needed both before and after RbfA during the maturation of 16S rRNA. It has affinity for free ribosomal 30S subunits but not for 70S ribosomes. This Lactobacillus delbrueckii subsp. bulgaricus (strain ATCC 11842 / DSM 20081 / BCRC 10696 / JCM 1002 / NBRC 13953 / NCIMB 11778 / NCTC 12712 / WDCM 00102 / Lb 14) protein is Ribosome maturation factor RimM.